The following is a 402-amino-acid chain: Protein FAM221B (402 aa).

Over residues 1-35 the composition is skewed to basic and acidic residues; sequence MEAHEIIEEPHITMDAEKHPPSKDPSAEDLQENHI. 2 disordered regions span residues 1–205 and 378–402; these read MEAH…TARP and DTQK…HRPL. Polar residues-rich tracts occupy residues 77-90 and 393-402; these read EPSI…TPTY and DTVSNWHRPL.

It belongs to the FAM221 family.

The chain is Protein FAM221B (FAM221B) from Homo sapiens (Human).